The sequence spans 456 residues: Enolase (456 aa).

Gln164 is a (2R)-2-phosphoglycerate binding site. The active-site Proton donor is Glu207. Mg(2+) is bound by residues Asp244, Glu287, and Asp314. Positions 339, 368, 369, and 390 each coordinate (2R)-2-phosphoglycerate. Lys339 serves as the catalytic Proton acceptor.

The protein belongs to the enolase family. In terms of assembly, component of the RNA degradosome, a multiprotein complex involved in RNA processing and mRNA degradation. Mg(2+) is required as a cofactor.

The protein localises to the cytoplasm. It is found in the secreted. The protein resides in the cell surface. The catalysed reaction is (2R)-2-phosphoglycerate = phosphoenolpyruvate + H2O. It participates in carbohydrate degradation; glycolysis; pyruvate from D-glyceraldehyde 3-phosphate: step 4/5. Its function is as follows. Catalyzes the reversible conversion of 2-phosphoglycerate (2-PG) into phosphoenolpyruvate (PEP). It is essential for the degradation of carbohydrates via glycolysis. This chain is Enolase, found in Francisella tularensis subsp. tularensis (strain FSC 198).